A 190-amino-acid polypeptide reads, in one-letter code: Probable thymidylate kinase (190 aa).

7–14 serves as a coordination point for ATP; the sequence is GIDGAGKT.

The protein belongs to the thymidylate kinase family.

It catalyses the reaction dTMP + ATP = dTDP + ADP. The protein is Probable thymidylate kinase of Thermoplasma volcanium (strain ATCC 51530 / DSM 4299 / JCM 9571 / NBRC 15438 / GSS1).